A 419-amino-acid chain; its full sequence is Glutamate dehydrogenase (419 aa).

Residue K105 is part of the active site. Position 219 to 225 (G219 to Y225) interacts with NAD(+).

Belongs to the Glu/Leu/Phe/Val dehydrogenases family. Homohexamer.

It carries out the reaction L-glutamate + NAD(+) + H2O = 2-oxoglutarate + NH4(+) + NADH + H(+). It catalyses the reaction L-glutamate + NADP(+) + H2O = 2-oxoglutarate + NH4(+) + NADPH + H(+). This is Glutamate dehydrogenase (gdhA) from Thermococcus profundus.